The chain runs to 238 residues: Probable transcriptional regulatory protein LACR_0237 (238 aa).

The protein belongs to the TACO1 family. YeeN subfamily.

It is found in the cytoplasm. This Lactococcus lactis subsp. cremoris (strain SK11) protein is Probable transcriptional regulatory protein LACR_0237.